The sequence spans 457 residues: Tubulin beta chain (457 aa).

GTP-binding residues include glutamine 11, glutamate 69, serine 138, glycine 142, threonine 143, glycine 144, asparagine 204, and asparagine 226. Glutamate 69 contributes to the Mg(2+) binding site. A phosphoserine mark is found at serine 278 and serine 280. Residues 423 to 457 (QQYQEATVEDDEEVDENGDFGAPQNQDEPITENFE) are disordered. The span at 429–440 (TVEDDEEVDENG) shows a compositional bias: acidic residues.

It belongs to the tubulin family. Dimer of alpha and beta chains. A typical microtubule is a hollow water-filled tube with an outer diameter of 25 nm and an inner diameter of 15 nM. Alpha-beta heterodimers associate head-to-tail to form protofilaments running lengthwise along the microtubule wall with the beta-tubulin subunit facing the microtubule plus end conferring a structural polarity. Microtubules usually have 13 protofilaments but different protofilament numbers can be found in some organisms and specialized cells. The cofactor is Mg(2+).

The protein localises to the cytoplasm. Its subcellular location is the cytoskeleton. Functionally, tubulin is the major constituent of microtubules, a cylinder consisting of laterally associated linear protofilaments composed of alpha- and beta-tubulin heterodimers. Microtubules grow by the addition of GTP-tubulin dimers to the microtubule end, where a stabilizing cap forms. Below the cap, tubulin dimers are in GDP-bound state, owing to GTPase activity of alpha-tubulin. The polypeptide is Tubulin beta chain (TUB2) (Saccharomyces cerevisiae (strain ATCC 204508 / S288c) (Baker's yeast)).